The primary structure comprises 419 residues: MDKFRVQGPTRLQGEVTISGAKNAALPILFSALLAEEPVEIQNVPKLKDIDTTMKLLSQLGAKVERNGSVWIDAGPVDVFCAPYDLVKTMRASIWALGPLVARFGQGQVSLPGGCAIGARPVDLHISGLEQLGAEIKLEEGYVKASVNGRLKGAHIVMDKVSVGATVTIMSAATLAEGTTIIENAAREPEIVDTANFLNALGAKIKGQGTDRITIEGVQRLGGGVYRVLPDRIETGTFLVAAAISGGKILCRNAQPDTLDAVLAKLRDAGADIETGEDWISLDMHGNRPKAVNVRTAPHPGFPTDMQAQFTLLNLVAEGTGVITETIFENRFMHIPELIRMGAHAEIESNTAICHGVKQLSGAQVMATDLRASASLVLAGCIAEGTTIVDRIYHIDRGYERIEDKLQALGANIQRVKGE.

A phosphoenolpyruvate-binding site is contributed by 22 to 23; the sequence is KN. Arg-91 lines the UDP-N-acetyl-alpha-D-glucosamine pocket. The Proton donor role is filled by Cys-115. A 2-(S-cysteinyl)pyruvic acid O-phosphothioketal modification is found at Cys-115. UDP-N-acetyl-alpha-D-glucosamine-binding positions include 120-124, 160-163, Asp-305, and Ile-327; these read RPVDL and KVSV.

It belongs to the EPSP synthase family. MurA subfamily.

The protein resides in the cytoplasm. The enzyme catalyses phosphoenolpyruvate + UDP-N-acetyl-alpha-D-glucosamine = UDP-N-acetyl-3-O-(1-carboxyvinyl)-alpha-D-glucosamine + phosphate. It participates in cell wall biogenesis; peptidoglycan biosynthesis. Cell wall formation. Adds enolpyruvyl to UDP-N-acetylglucosamine. The chain is UDP-N-acetylglucosamine 1-carboxyvinyltransferase from Klebsiella pneumoniae (strain 342).